The primary structure comprises 323 residues: Nucleotide-binding protein ZMO1325 (323 aa).

An ATP-binding site is contributed by 25 to 32; it reads GLSGAGKS. 78 to 81 is a binding site for GTP; it reads DSRT.

The protein belongs to the RapZ-like family.

Functionally, displays ATPase and GTPase activities. The polypeptide is Nucleotide-binding protein ZMO1325 (Zymomonas mobilis subsp. mobilis (strain ATCC 31821 / ZM4 / CP4)).